A 364-amino-acid polypeptide reads, in one-letter code: GDP-fucose transporter 1 (364 aa).

8 helical membrane passes run phenylalanine 34 to valine 56, valine 76 to cysteine 98, leucine 111 to phenylalanine 130, valine 140 to leucine 162, serine 167 to valine 185, serine 195 to isoleucine 214, isoleucine 227 to leucine 249, and alanine 264 to leucine 286. The tract at residues methionine 345 to valine 364 is disordered.

Belongs to the TPT transporter family. SLC35C subfamily.

Its subcellular location is the golgi apparatus membrane. The enzyme catalyses GMP(out) + GDP-beta-L-fucose(in) = GMP(in) + GDP-beta-L-fucose(out). In terms of biological role, antiporter specific for GDP-l-fucose and depending on the concomitant reverse transport of GMP. Involved in GDP-fucose import from the cytoplasm into the Golgi lumen. The sequence is that of GDP-fucose transporter 1 (SLC35C1) from Bos taurus (Bovine).